A 380-amino-acid polypeptide reads, in one-letter code: Outer mitochondrial transmembrane helix translocase (380 aa).

At 1–18 the chain is on the mitochondrial intermembrane side; sequence MLSDIPRDALLRPLTRNE. A helical transmembrane segment spans residues 19–37; the sequence is VVGMLVRLTVFGAATYYSI. At 38-380 the chain is on the cytoplasmic side; the sequence is KWVVDALDPT…PANLREVPLD (343 aa). Position 136–143 (136–143) interacts with ATP; sequence GPPGCGKT.

The protein belongs to the AAA ATPase family. MSP1 subfamily.

The protein resides in the mitochondrion outer membrane. It is found in the peroxisome membrane. Its subcellular location is the postsynaptic cell membrane. The enzyme catalyses [protein]-with a C-terminal TM segment(out) + ATP + H2O = [protein]-with a C-terminal TM segment(in) + ADP + phosphate + H(+). Outer mitochondrial translocase required to remove mislocalized tail-anchored transmembrane proteins on mitochondria. Specifically recognizes and binds tail-anchored transmembrane proteins: acts as a dislocase that mediates the ATP-dependent extraction of mistargeted tail-anchored transmembrane proteins from the mitochondrion outer membrane. Also plays a critical role in regulating the surface expression of AMPA receptors (AMPAR), thereby regulating synaptic plasticity and learning and memory. The sequence is that of Outer mitochondrial transmembrane helix translocase from Danio rerio (Zebrafish).